The following is a 179-amino-acid chain: ATP synthase subunit b, chloroplastic (179 aa).

A helical membrane pass occupies residues 35-51 (IVILGGGIFKLGSTALS).

It belongs to the ATPase B chain family. F-type ATPases have 2 components, F(1) - the catalytic core - and F(0) - the membrane proton channel. F(1) has five subunits: alpha(3), beta(3), gamma(1), delta(1), epsilon(1). F(0) has four main subunits: a(1), b(1), b'(1) and c(10-14). The alpha and beta chains form an alternating ring which encloses part of the gamma chain. F(1) is attached to F(0) by a central stalk formed by the gamma and epsilon chains, while a peripheral stalk is formed by the delta, b and b' chains.

It is found in the plastid. Its subcellular location is the chloroplast thylakoid membrane. F(1)F(0) ATP synthase produces ATP from ADP in the presence of a proton or sodium gradient. F-type ATPases consist of two structural domains, F(1) containing the extramembraneous catalytic core and F(0) containing the membrane proton channel, linked together by a central stalk and a peripheral stalk. During catalysis, ATP synthesis in the catalytic domain of F(1) is coupled via a rotary mechanism of the central stalk subunits to proton translocation. Functionally, component of the F(0) channel, it forms part of the peripheral stalk, linking F(1) to F(0). The chain is ATP synthase subunit b, chloroplastic from Emiliania huxleyi (Coccolithophore).